Reading from the N-terminus, the 320-residue chain is o-succinylbenzoate synthase (320 aa).

Lys133 acts as the Proton donor in catalysis. Asp161, Glu190, and Asp213 together coordinate Mg(2+). Catalysis depends on Lys235, which acts as the Proton acceptor.

This sequence belongs to the mandelate racemase/muconate lactonizing enzyme family. MenC type 1 subfamily. Requires a divalent metal cation as cofactor.

It catalyses the reaction (1R,6R)-6-hydroxy-2-succinyl-cyclohexa-2,4-diene-1-carboxylate = 2-succinylbenzoate + H2O. It functions in the pathway quinol/quinone metabolism; 1,4-dihydroxy-2-naphthoate biosynthesis; 1,4-dihydroxy-2-naphthoate from chorismate: step 4/7. The protein operates within quinol/quinone metabolism; menaquinone biosynthesis. Its function is as follows. Converts 2-succinyl-6-hydroxy-2,4-cyclohexadiene-1-carboxylate (SHCHC) to 2-succinylbenzoate (OSB). The polypeptide is o-succinylbenzoate synthase (Citrobacter koseri (strain ATCC BAA-895 / CDC 4225-83 / SGSC4696)).